We begin with the raw amino-acid sequence, 2130 residues long: Highly reducing polyketide synthase anuA (2130 aa).

The Ketosynthase family 3 (KS3) domain occupies 1–213 (MKAGVLSGTS…GANCHVILEQ (213 aa)). Residues 317-644 (FVFTGQGSQW…SFAGNLWLKG (328 aa)) form the Malonyl-CoA:ACP transacylase (MAT) domain. Positions 701–836 (HELLGSLLTG…GSIAIHPRNA (136 aa)) are N-terminal hotdog fold. One can recognise a PKS/mFAS DH domain in the interval 701–1000 (HELLGSLLTG…LSPYQSTSQA (300 aa)). Catalysis depends on histidine 733, which acts as the Proton acceptor; for dehydratase activity. Residues 849–1000 (LESTAKRTWY…LSPYQSTSQA (152 aa)) are C-terminal hotdog fold. Aspartate 914 (proton donor; for dehydratase activity) is an active-site residue. Residues 1405 to 1722 (GQLDTIYFQQ…SRSRIGKVAI (318 aa)) form the Enoyl reductase (ER) domain. The Ketoreductase (KR) domain occupies 1747-1927 (SYVMVGCLGG…AVAVGLGMIS (181 aa)). Residues 2047–2125 (TLDEAVLDHI…SLRDLAMTSL (79 aa)) enclose the Carrier domain. Serine 2084 bears the O-(pantetheine 4'-phosphoryl)serine mark.

The cofactor is pantetheine 4'-phosphate.

It functions in the pathway secondary metabolite biosynthesis. Functionally, highly reducing polyketide synthase; part of the gene cluster that mediates the biosynthesis of annullatin D, an alkylated aromatic polyketide with a fused dihydrobenzofuran lactone ring system that exhibits potent agonistic activities toward the cannabinoid receptors. The annullatin backbone 2-hydroxymethyl-3-pentylphenol is assembled from one acetyl-CoA starter unit and 5 malonyl-CoA elongation units by cooperation of the highly reducing polyketide synthase anuA, the short-chain dehydrogenase anuB and the oxidoreductase anuC, before being hydroxylated at the C-5 alkyl chain by the cytochrome P450 monooxygenase anuE to form (8S)-annullatin E. The prenyltransferase anuH subsequently installs one isoprenyl group at the benzene ring to form (8S)-annullatin J. Enzymatic or nonenzymatic dihydro-benzofuran ring formation between the prenyl and the phenolic hydroxyl groups in (8S)-annullatin J results in two diastereomers (2S,9S)-annullatin H and compound 12. The intermediate (2S,9S)-annullatin H is then converted to (2S,9S)-annullatin D by the FAD-linked oxidoreductase anuG-catalyzed five-member lactone ring formation. The isomer 12 acts as a substrate for the short-chain dehydrogenase anuF and is oxidized to (2R)-annullatin F, which is subsequently acetylated by an acetyltransferase leading to (2R)-annullatin G formation. The remaining enzymes identified within the cluster, anuD, anuI and anuJ, seem not to be involved in annullatin biosynthesis. This Penicillium roqueforti (strain FM164) protein is Highly reducing polyketide synthase anuA.